Reading from the N-terminus, the 388-residue chain is Na(+)/H(+) antiporter NhaA (388 aa).

Over 1–11 (MKHLHRFFSSD) the chain is Cytoplasmic. A helical transmembrane segment spans residues 12 to 31 (ASGGIILIIAAILAMMMANS). The Periplasmic portion of the chain corresponds to 32 to 58 (GATSGWYHDFLETPVQLRVGSLEINKN). A helical membrane pass occupies residues 59–80 (MLLWINDALMAVFFLLVGLEVK). Residues 81 to 96 (RELMQGSLASLRQAAF) are Cytoplasmic-facing. The chain crosses the membrane as a helical span at residues 97 to 116 (PVIAAIGGMIVPALLYLAFN). Over 117–122 (YADPIT) the chain is Periplasmic. A helical membrane pass occupies residues 123–130 (REGWAIPA). Residues 131–154 (ATDIAFALGVLALLGSRVPLALKI) are Cytoplasmic-facing. A helical membrane pass occupies residues 155–176 (FLMALAIIDDLGAIIIIALFYT). At 177–180 (NDLS) the chain is on the periplasmic side. The helical transmembrane segment at 181-200 (MASLGVAAVAIAVLAVLNLC) threads the bilayer. At 201–204 (GVRR) the chain is on the cytoplasmic side. The helical transmembrane segment at 205–222 (TGVYILVGVVLWTAVLKS) threads the bilayer. A topological domain (periplasmic) is located at residue glycine 223. Residues 224–236 (VHATLAGVIVGFF) traverse the membrane as a helical segment. The Cytoplasmic portion of the chain corresponds to 237 to 253 (IPLKEKHGRSPAKRLEH). The chain crosses the membrane as a helical span at residues 254–272 (VLHPWVAYLILPLFAFANA). Residues 273-286 (GVSLQGVTLDGLTS) lie on the Periplasmic side of the membrane. A helical transmembrane segment spans residues 287–310 (ILPLGIIAGLLIGKPLGISLFCWL). Topologically, residues 311–339 (ALRLKLAHLPEGTTYQQIMAVGILCGIGF) are cytoplasmic. The chain crosses the membrane as a helical span at residues 340–350 (TMSIFIASLAF). Topologically, residues 351–357 (GSVDPEL) are periplasmic. The helical transmembrane segment at 358–380 (INWAKLGILVGSISSAVIGYSWL) threads the bilayer. At 381–388 (RVRLRPSV) the chain is on the cytoplasmic side.

It belongs to the NhaA Na(+)/H(+) (TC 2.A.33) antiporter family.

The protein resides in the cell inner membrane. It carries out the reaction Na(+)(in) + 2 H(+)(out) = Na(+)(out) + 2 H(+)(in). Na(+)/H(+) antiporter that extrudes sodium in exchange for external protons. This Shigella boydii serotype 4 (strain Sb227) protein is Na(+)/H(+) antiporter NhaA.